A 495-amino-acid polypeptide reads, in one-letter code: Solute carrier family 2, facilitated glucose transporter member 3 (495 aa).

Topologically, residues 1–10 (MGTQKVTVSL) are cytoplasmic. Residues 11–32 (IFALSIATIGSFQFGYNTGVIN) form a helical membrane-spanning segment. Topologically, residues 33 to 64 (APETIIKDFLNYTLEEKSENLPTEVLLTSLWS) are extracellular. Asn43 is a glycosylation site (N-linked (GlcNAc...) asparagine). The helical transmembrane segment at 65 to 85 (LSVAIFSVGGMIGSFSVGLFV) threads the bilayer. At 86 to 90 (NRFGR) the chain is on the cytoplasmic side. Residues 91–111 (RNSMLMVNLLAVAGGCLMGFC) form a helical membrane-spanning segment. The Extracellular segment spans residues 112-118 (KIAQSVE). A helical transmembrane segment spans residues 119–142 (MLILGRLIIGLFCGLCTGFVPMYI). Residues 143-153 (GEISPTALRGA) are Cytoplasmic-facing. A helical transmembrane segment spans residues 154 to 174 (FGTLNQLGIVIGILVAQIFGL). Gln159 serves as a coordination point for D-glucose. At 175–183 (KVIMGTEEL) the chain is on the extracellular side. Residues 184 to 204 (WPLLLGFTIIPAVLQSAALPF) traverse the membrane as a helical segment. At 205-269 (CPESPRFLLI…LFRSRSYRQP (65 aa)) the chain is on the cytoplasmic side. Thr232 carries the post-translational modification Phosphothreonine. A helical membrane pass occupies residues 270–290 (IIISIMLQLSQQLSGINAVFY). An important for selectivity against fructose region spans residues 277–279 (QLS). D-glucose-binding positions include 280 to 281 (QQ) and Asn286. Topologically, residues 291-304 (YSTGIFKDAGVEEP) are extracellular. Residues 305 to 325 (IYATIGAGVVNTIFTVVSLFL) form a helical membrane-spanning segment. A D-glucose-binding site is contributed by Asn315. At 326–331 (VERAGR) the chain is on the cytoplasmic side. The helical transmembrane segment at 332 to 352 (RTLHMIGLGGMAVCSILMTIS) threads the bilayer. The Extracellular portion of the chain corresponds to 353–363 (LLLKDNYNWMS). The chain crosses the membrane as a helical span at residues 364–389 (FVCIGAILVFVAFFEIGPGPIPWFIV). Glu378 and Trp386 together coordinate D-glucose. The Cytoplasmic portion of the chain corresponds to 390–399 (AELFSQGPRP). The helical transmembrane segment at 400 to 420 (AAMAVAGCSNWTSNFLVGLLF) threads the bilayer. At 421 to 429 (PSAAFYLGA) the chain is on the extracellular side. A helical membrane pass occupies residues 430 to 450 (YVFIIFTGFLIVFLVFTFFKV). At 451–495 (PETRGRTFEEITRAFEGQGQDANRAEKGPIVEMNSMQPVKETATV) the chain is on the cytoplasmic side. A Phosphoserine modification is found at Ser485. Thr492 carries the phosphothreonine modification.

The protein belongs to the major facilitator superfamily. Sugar transporter (TC 2.A.1.1) family. Glucose transporter subfamily. As to quaternary structure, interacts with SMIM43; the interaction may promote SLC2A3-mediated glucose transport to meet the energy needs of mesendoderm differentiation.

It localises to the cell membrane. The protein localises to the perikaryon. Its subcellular location is the cell projection. It carries out the reaction D-glucose(out) = D-glucose(in). The catalysed reaction is D-galactose(in) = D-galactose(out). With respect to regulation, deoxyglucose transport is inhibited by D-glucose, D-galactose and maltose. Galactose transport is inhibited by D-glucose and maltose. Functionally, facilitative glucose transporter. Can also mediate the uptake of various other monosaccharides across the cell membrane. Mediates the uptake of glucose, 2-deoxyglucose, galactose, mannose, xylose and fucose, and probably also dehydroascorbate. Does not mediate fructose transport. Required for mesendoderm differentiation. The protein is Solute carrier family 2, facilitated glucose transporter member 3 of Canis lupus familiaris (Dog).